Consider the following 873-residue polypeptide: Bifunctional uridylyltransferase/uridylyl-removing enzyme (873 aa).

Residues 1–332 (MKYLSPLSLS…HQGEQDDAII (332 aa)) are uridylyltransferase. The segment at 333-692 (IDDDFQRRGR…ISKNASRGGT (360 aa)) is uridylyl-removing. In terms of domain architecture, HD spans 451–573 (VDEHSIRLLK…VRDEERLDYL (123 aa)). 2 ACT domains span residues 693-777 (EIFV…RPPR) and 800-873 (LMEF…RLSS).

The protein belongs to the GlnD family. The cofactor is Mg(2+).

It carries out the reaction [protein-PII]-L-tyrosine + UTP = [protein-PII]-uridylyl-L-tyrosine + diphosphate. It catalyses the reaction [protein-PII]-uridylyl-L-tyrosine + H2O = [protein-PII]-L-tyrosine + UMP + H(+). Its activity is regulated as follows. Uridylyltransferase (UTase) activity is inhibited by glutamine, while glutamine activates uridylyl-removing (UR) activity. In terms of biological role, modifies, by uridylylation and deuridylylation, the PII regulatory proteins (GlnB and homologs), in response to the nitrogen status of the cell that GlnD senses through the glutamine level. Under low glutamine levels, catalyzes the conversion of the PII proteins and UTP to PII-UMP and PPi, while under higher glutamine levels, GlnD hydrolyzes PII-UMP to PII and UMP (deuridylylation). Thus, controls uridylylation state and activity of the PII proteins, and plays an important role in the regulation of nitrogen assimilation and metabolism. The polypeptide is Bifunctional uridylyltransferase/uridylyl-removing enzyme (Aliivibrio fischeri (strain MJ11) (Vibrio fischeri)).